A 526-amino-acid polypeptide reads, in one-letter code: Adenylosuccinate synthetase (526 aa).

GTP-binding positions include 102 to 108 and 130 to 132; these read GDEGKGK and GHT. Asp103 acts as the Proton acceptor in catalysis. Mg(2+) is bound by residues Asp103 and Gly130. IMP-binding positions include 103–106, 128–131, Thr219, Arg233, Asn310, Thr325, and Arg392; these read DEGK and NAGH. His131 acts as the Proton donor in catalysis. 388 to 394 contacts substrate; that stretch reads TTTGRTR. GTP-binding positions include Arg394, 420–422, and 502–504; these read KVD and GVG.

The protein belongs to the adenylosuccinate synthetase family. Homodimer. The cofactor is Mg(2+).

The protein localises to the cytoplasm. It catalyses the reaction IMP + L-aspartate + GTP = N(6)-(1,2-dicarboxyethyl)-AMP + GDP + phosphate + 2 H(+). Its pathway is purine metabolism; AMP biosynthesis via de novo pathway; AMP from IMP: step 1/2. Plays an important role in the de novo pathway and in the salvage pathway of purine nucleotide biosynthesis. Catalyzes the first committed step in the biosynthesis of AMP from IMP. The protein is Adenylosuccinate synthetase of Phaeodactylum tricornutum (strain CCAP 1055/1).